The chain runs to 278 residues: MSVPTVLQKILARKAEEVAERRARVNLAEVERLARSADAPRGFANALLERAKRKEPAVIAEIKKASPSKGVLREHFVPAEIARSYEAGGAACLSVLTDVDFFQGADAYLKEARAACALPVIRKDFMIDPYQIVEARAIGADCILLIVSALDDVLMAELAATAKSVGLDVLVEVHDGTELERALKTLDTPLVGINNRNLHTFEVSLETTLDLLPEIPRDRLVVTESGILNRADVELMEVSEVYAFLVGEAFMRADDPGLELKRLFFQERGAVVLGADPD.

Belongs to the TrpC family.

It carries out the reaction 1-(2-carboxyphenylamino)-1-deoxy-D-ribulose 5-phosphate + H(+) = (1S,2R)-1-C-(indol-3-yl)glycerol 3-phosphate + CO2 + H2O. Its pathway is amino-acid biosynthesis; L-tryptophan biosynthesis; L-tryptophan from chorismate: step 4/5. The sequence is that of Indole-3-glycerol phosphate synthase (trpC) from Pseudomonas aeruginosa (strain ATCC 15692 / DSM 22644 / CIP 104116 / JCM 14847 / LMG 12228 / 1C / PRS 101 / PAO1).